A 641-amino-acid chain; its full sequence is MSMKRFGKAAYRIANELVAKGGRLPIFQRFLPRIFPATYNLGVHVVLKKAPFPRQNALRIARLVTRHGRVFRPFSSVIIERHRFQNQNDWRRKFQPIRKELPRNVDLVERIRQIFGNSLRYNEDLKSTEWPNRIDSYEFGEFLGQGCNAAVYSARLANSDAESSGNTHYGAGFNEVTNILAEIPPVSKVAQKKFPLAIKLMFNFEHDRDGDAHLLKSMGNELAPYPNAAKLLNGQMGTFRPLPAKHPNVVRIQTAFIDSLKVLPDAIERYPDALHTARWYESIASEPKTMYVVMRRYRQTLHEYVWTRHRNYWTGRVIIAQLLEACTYLHKHKVAQRDMKSDNILLEYDFDDEIPQLVVADFGCALACDNWQVDYESDEVSLGGNAKTKAPEIATAVPGKNVKVNFEMADTWAAGGLSYEVLTRSNPFYKLLDTATYQESELPALPSRVNFVARDVIFDLLKRDPNERVKPNIAANALNLSLFRMGEDVKQMMEKCGISQMTTLLAGSSKVLSQKINSRLDKVMNLITAETIMANLAPHLISRAERQLRATFLSRMNREDIWRSLQYFFPAGVQLDTPATSSDCLETISSLMSSFSNDSENYEKQQKPAKNGYNNVPLLLRNVIRTDADGINGIVHRVRSK.

The N-terminal 74 residues, 1-74, are a transit peptide targeting the mitochondrion; the sequence is MSMKRFGKAA…TRHGRVFRPF (74 aa). Residues 137 to 483 form the Protein kinase domain; that stretch reads YEFGEFLGQG…AANALNLSLF (347 aa). Residues 143–151 and lysine 199 contribute to the ATP site; that span reads LGQGCNAAV. Aspartate 338 serves as the catalytic Proton acceptor.

The protein belongs to the protein kinase superfamily. Ser/Thr protein kinase family. It depends on Mg(2+) as a cofactor. In terms of processing, autophosphorylated.

It is found in the mitochondrion. It catalyses the reaction L-seryl-[protein] + ATP = O-phospho-L-seryl-[protein] + ADP + H(+). It carries out the reaction L-threonyl-[protein] + ATP = O-phospho-L-threonyl-[protein] + ADP + H(+). Protects against mitochondrial dysfunction during cellular stress, potentially by phosphorylating mitochondrial proteins. Plays a role in mitophagy. This chain is Serine/threonine-protein kinase pink-1, mitochondrial (pink-1), found in Caenorhabditis elegans.